A 321-amino-acid chain; its full sequence is Ornithine carbamoyltransferase (321 aa).

Residues 53-56 (STRT), Gln-80, Arg-104, and 131-134 (HPCQ) each bind carbamoyl phosphate. Residues Asn-166, Asp-230, and 234–235 (SM) contribute to the L-ornithine site. Residues 270–271 (CL) and Arg-298 contribute to the carbamoyl phosphate site.

The protein belongs to the aspartate/ornithine carbamoyltransferase superfamily. OTCase family.

Its subcellular location is the cytoplasm. It catalyses the reaction carbamoyl phosphate + L-ornithine = L-citrulline + phosphate + H(+). It participates in amino-acid biosynthesis; L-arginine biosynthesis; L-arginine from L-ornithine and carbamoyl phosphate: step 1/3. In terms of biological role, reversibly catalyzes the transfer of the carbamoyl group from carbamoyl phosphate (CP) to the N(epsilon) atom of ornithine (ORN) to produce L-citrulline. This Bifidobacterium longum (strain NCC 2705) protein is Ornithine carbamoyltransferase.